Reading from the N-terminus, the 58-residue chain is Succinate dehydrogenase subunit 8A, mitochondrial (58 aa).

As to quaternary structure, component of complex II composed of eight subunits in plants: four classical SDH subunits SDH1, SDH2, SDH3 and SDH4 (a flavoprotein (FP), an iron-sulfur protein (IP), and a cytochrome b composed of a large and a small subunit.), as well as four subunits unknown in mitochondria from bacteria and heterotrophic eukaryotes.

The protein resides in the mitochondrion inner membrane. It participates in carbohydrate metabolism; tricarboxylic acid cycle. The protein is Succinate dehydrogenase subunit 8A, mitochondrial of Oryza sativa subsp. japonica (Rice).